A 152-amino-acid chain; its full sequence is D-aminoacyl-tRNA deacylase (152 aa).

The short motif at 142–143 (GP) is the Gly-cisPro motif, important for rejection of L-amino acids element.

The protein belongs to the DTD family. In terms of assembly, homodimer.

It localises to the cytoplasm. The catalysed reaction is glycyl-tRNA(Ala) + H2O = tRNA(Ala) + glycine + H(+). It catalyses the reaction a D-aminoacyl-tRNA + H2O = a tRNA + a D-alpha-amino acid + H(+). In terms of biological role, an aminoacyl-tRNA editing enzyme that deacylates mischarged D-aminoacyl-tRNAs. Also deacylates mischarged glycyl-tRNA(Ala), protecting cells against glycine mischarging by AlaRS. Acts via tRNA-based rather than protein-based catalysis; rejects L-amino acids rather than detecting D-amino acids in the active site. By recycling D-aminoacyl-tRNA to D-amino acids and free tRNA molecules, this enzyme counteracts the toxicity associated with the formation of D-aminoacyl-tRNA entities in vivo and helps enforce protein L-homochirality. The polypeptide is D-aminoacyl-tRNA deacylase (Burkholderia ambifaria (strain ATCC BAA-244 / DSM 16087 / CCUG 44356 / LMG 19182 / AMMD) (Burkholderia cepacia (strain AMMD))).